Here is a 255-residue protein sequence, read N- to C-terminus: Hemin import ATP-binding protein HmuV (255 aa).

One can recognise an ABC transporter domain in the interval 2 to 238; sequence LRVENLHVRR…EPLKAVFGLE (237 aa). 34–41 is an ATP binding site; the sequence is GPNGAGKS.

The protein belongs to the ABC transporter superfamily. Heme (hemin) importer (TC 3.A.1.14.5) family. The complex is composed of two ATP-binding proteins (HmuV), two transmembrane proteins (HmuU) and a solute-binding protein (HmuT).

Its subcellular location is the cell inner membrane. Part of the ABC transporter complex HmuTUV involved in hemin import. Responsible for energy coupling to the transport system. This Pseudomonas fluorescens (strain ATCC BAA-477 / NRRL B-23932 / Pf-5) protein is Hemin import ATP-binding protein HmuV.